The primary structure comprises 373 residues: Queuine tRNA-ribosyltransferase (373 aa).

Asp91 (proton acceptor) is an active-site residue. Residues 91-95, Asp145, Gln187, and Gly214 contribute to the substrate site; that span reads DSGGF. The tract at residues 245–251 is RNA binding; sequence GVGKPED. Catalysis depends on Asp264, which acts as the Nucleophile. The interval 269–273 is RNA binding; important for wobble base 34 recognition; it reads TRNAR. Cys302, Cys304, Cys307, and His333 together coordinate Zn(2+).

This sequence belongs to the queuine tRNA-ribosyltransferase family. Homodimer. Within each dimer, one monomer is responsible for RNA recognition and catalysis, while the other monomer binds to the replacement base PreQ1. Requires Zn(2+) as cofactor.

The enzyme catalyses 7-aminomethyl-7-carbaguanine + guanosine(34) in tRNA = 7-aminomethyl-7-carbaguanosine(34) in tRNA + guanine. It functions in the pathway tRNA modification; tRNA-queuosine biosynthesis. Its function is as follows. Catalyzes the base-exchange of a guanine (G) residue with the queuine precursor 7-aminomethyl-7-deazaguanine (PreQ1) at position 34 (anticodon wobble position) in tRNAs with GU(N) anticodons (tRNA-Asp, -Asn, -His and -Tyr). Catalysis occurs through a double-displacement mechanism. The nucleophile active site attacks the C1' of nucleotide 34 to detach the guanine base from the RNA, forming a covalent enzyme-RNA intermediate. The proton acceptor active site deprotonates the incoming PreQ1, allowing a nucleophilic attack on the C1' of the ribose to form the product. After dissociation, two additional enzymatic reactions on the tRNA convert PreQ1 to queuine (Q), resulting in the hypermodified nucleoside queuosine (7-(((4,5-cis-dihydroxy-2-cyclopenten-1-yl)amino)methyl)-7-deazaguanosine). In Idiomarina loihiensis (strain ATCC BAA-735 / DSM 15497 / L2-TR), this protein is Queuine tRNA-ribosyltransferase.